Here is a 552-residue protein sequence, read N- to C-terminus: MAVSTSFSGAKLEALLFKSASNSSSTRNLSSSHLPGFCKSIRTRRILFQRTGVSSFTPFKCELASSDVLVQNDEIDPPKSSNLSALEQLKTSAVDRYTKERSSIVVIGLSIHTTPVEMREKLAIPEAEWPRAIGELCGLNHIEEAAVLSTCNRMEIYVVALSQHRGVKEVTEWMSKTSGIPVSEICQHRFLLYNNDATQHIFEVSAGLDSLVLGEGQILAQVKQVVKVGQGVAGFGRNISGLFKHAITVGKRVRTETNIAAGAVSVSSAAVELALMKLPEPSHATARMLVIGAGKMGKLVIKHLVAKGCTKMVVVNRSEERVTAIREEMKDVEIIYKPLTEMLSCTAEADVIFTSTASESLLFTKEQVKDLPPVGHDVGGLRLFIDISVPRNVGACINNLEDVRVYNVDDLKEVVAANKEDRLRKAMEAQSIITEESKQFEAWRDSLETVPTIKKLRAYAERIRTAELEKCLSKMGDDIPKKTRRAVDDLSRGIVNKLLHGPMQHLRCDGSDSRTLSETLENMHALNRMFSLETEIAVLEQKIRAKVEQNQK.

Residues 150 to 153 (TCNR), Ser210, 215 to 217 (EGQ), and Gln221 contribute to the substrate site. Cys151 acts as the Nucleophile in catalysis. Residue 292–297 (GAGKMG) coordinates NADP(+).

This sequence belongs to the glutamyl-tRNA reductase family. As to expression, primarily in cotyledons and hypocotyls of greening cucumber seedlings.

The protein localises to the plastid. Its subcellular location is the chloroplast. It carries out the reaction (S)-4-amino-5-oxopentanoate + tRNA(Glu) + NADP(+) = L-glutamyl-tRNA(Glu) + NADPH + H(+). The protein operates within porphyrin-containing compound metabolism; protoporphyrin-IX biosynthesis; 5-aminolevulinate from L-glutamyl-tRNA(Glu): step 1/2. Catalyzes the NADPH-dependent reduction of glutamyl-tRNA(Glu) to glutamate 1-semialdehyde (GSA). The polypeptide is Glutamyl-tRNA reductase 1, chloroplastic (HEMA1) (Cucumis sativus (Cucumber)).